The sequence spans 292 residues: Ribosomal protein L11 methyltransferase (292 aa).

S-adenosyl-L-methionine contacts are provided by Thr144, Gly165, Asp187, and Asn229.

Belongs to the methyltransferase superfamily. PrmA family.

The protein localises to the cytoplasm. The catalysed reaction is L-lysyl-[protein] + 3 S-adenosyl-L-methionine = N(6),N(6),N(6)-trimethyl-L-lysyl-[protein] + 3 S-adenosyl-L-homocysteine + 3 H(+). In terms of biological role, methylates ribosomal protein L11. This is Ribosomal protein L11 methyltransferase from Pseudomonas putida (strain ATCC 47054 / DSM 6125 / CFBP 8728 / NCIMB 11950 / KT2440).